The following is a 249-amino-acid chain: Triosephosphate isomerase (249 aa).

N12 and K14 together coordinate substrate. K14 bears the N6-acetyllysine mark. N16 carries the post-translational modification Deamidated asparagine. Position 68 is a 3'-nitrotyrosine (Y68). Position 72 is a deamidated asparagine (N72). S80 carries the phosphoserine modification. H96 acts as the Electrophile in catalysis. Position 106 is a phosphoserine (S106). Residue K142 forms a Glycyl lysine isopeptide (Lys-Gly) (interchain with G-Cter in SUMO1) linkage. K149 carries the N6-succinyllysine modification. Position 156 is an N6-acetyllysine; alternate (K156). K156 carries the post-translational modification N6-succinyllysine; alternate. S159 carries the phosphoserine modification. E166 acts as the Proton acceptor in catalysis. T173 carries the phosphothreonine modification. An N6-acetyllysine; alternate modification is found at K194. K194 is subject to N6-succinyllysine; alternate. K194 is modified (N6-methyllysine; alternate). S198 carries the post-translational modification Phosphoserine. Position 209 is a 3'-nitrotyrosine (Y209). A Phosphoserine modification is found at S212. T214 is subject to Phosphothreonine. The residue at position 223 (S223) is a Phosphoserine. Residue K238 is modified to N6-acetyllysine.

The protein belongs to the triosephosphate isomerase family. In terms of assembly, homodimer. Post-translationally, asn-16 and Asn-72 undergo deamidation which gives rise to four extra negative charges. These are expected to decrease subunit-subunit interactions and so expose the hydrophobic interface to the aqueous environment.

Its subcellular location is the cytoplasm. It carries out the reaction D-glyceraldehyde 3-phosphate = dihydroxyacetone phosphate. It catalyses the reaction dihydroxyacetone phosphate = methylglyoxal + phosphate. Its pathway is carbohydrate degradation; glycolysis; D-glyceraldehyde 3-phosphate from glycerone phosphate: step 1/1. It functions in the pathway carbohydrate biosynthesis; gluconeogenesis. Its function is as follows. Triosephosphate isomerase is an extremely efficient metabolic enzyme that catalyzes the interconversion between dihydroxyacetone phosphate (DHAP) and D-glyceraldehyde-3-phosphate (G3P) in glycolysis and gluconeogenesis. It is also responsible for the non-negligible production of methylglyoxal a reactive cytotoxic side-product that modifies and can alter proteins, DNA and lipids. The polypeptide is Triosephosphate isomerase (TPI1) (Oryctolagus cuniculus (Rabbit)).